Consider the following 356-residue polypeptide: Golgi-resident adenosine 3',5'-bisphosphate 3'-phosphatase (356 aa).

M1 bears the N-acetylmethionine mark. Residues 1–12 (MAPMGIRLSPLG) are Cytoplasmic-facing. A helical transmembrane segment spans residues 13 to 33 (VAVFFLLGLGVLYHLYSGFLA). Topologically, residues 34-356 (GRFSLFGLGG…KLPDLEKSGH (323 aa)) are lumenal. The disordered stretch occupies residues 82 to 104 (VRESNVLHEKSKGKTREGAEDKM). D108 acts as the Proton acceptor in catalysis. E131, D172, L174, and D175 together coordinate Mg(2+). T177 functions as the Proton acceptor in the catalytic mechanism. AMP is bound by residues S240 and H243. An N-linked (GlcNAc...) asparagine glycan is attached at N257. AMP is bound by residues G266 and K270. D298 is a Mg(2+) binding site.

This sequence belongs to the inositol monophosphatase superfamily. The cofactor is Mg(2+). Contains N-linked glycan resistant to endoglycosydase H.

The protein localises to the golgi apparatus. It localises to the trans-Golgi network membrane. It carries out the reaction adenosine 3',5'-bisphosphate + H2O = AMP + phosphate. The protein operates within sulfur metabolism. Strongly inhibited by lithium. Its function is as follows. Exhibits 3'-nucleotidase activity toward adenosine 3',5'-bisphosphate (PAP), namely hydrolyzes adenosine 3',5'-bisphosphate into adenosine 5'-monophosphate (AMP) and a phosphate. May play a role in the formation of skeletal elements derived through endochondral ossification, possibly by clearing adenosine 3',5'-bisphosphate produced by Golgi sulfotransferases during glycosaminoglycan sulfation. Has no activity toward 3'-phosphoadenosine 5'-phosphosulfate (PAPS) or inositol phosphate (IP) substrates including I(1)P, I(1,4)P2, I(1,3,4)P3, I(1,4,5)P3 and I(1,3,4,5)P4. The protein is Golgi-resident adenosine 3',5'-bisphosphate 3'-phosphatase (Bpnt2) of Rattus norvegicus (Rat).